Reading from the N-terminus, the 847-residue chain is Mitogen-activated protein kinase kinase kinase 11 (847 aa).

Ser-11 carries the phosphoserine modification. The interval 11-38 (SPLGSWNGSGSGGGGGGGGGRPEGSPKA) is disordered. Residues 17–32 (NGSGSGGGGGGGGGRP) are compositionally biased toward gly residues. Residue Ser-35 is modified to Phosphoserine. One can recognise an SH3 domain in the interval 41–105 (YANPVWTALF…PSNYVSRGGG (65 aa)). In terms of domain architecture, Protein kinase spans 117–379 (LRLEEVIGIG…ASILQQLEAL (263 aa)). ATP is bound by residues 123–131 (IGIGGFGKV) and Lys-144. Asp-241 acts as the Proton acceptor in catalysis. A Phosphothreonine; by autocatalysis modification is found at Thr-277. A Phosphoserine; by autocatalysis and MAP4K1 modification is found at Ser-281. Ser-394 carries the phosphoserine modification. Leucine-zipper regions lie at residues 403–424 (IQGL…EEEL) and 438–459 (LRRR…ELTL). Phosphoserine is present on residues Ser-507, Ser-524, Ser-548, Ser-555, and Ser-556. Positions 537-643 (PAEPGQAWGR…SSGTPKLIQR (107 aa)) are disordered. The span at 550-562 (RRLEDSSNGERRA) shows a compositional bias: basic and acidic residues. The segment covering 597–609 (SSPLGSPSTPPAL) has biased composition (low complexity). Phosphoserine is present on residues Ser-654, Ser-693, and Ser-705. Positions 655–847 (LGLGRDLQPP…QAPWVPEAGP (193 aa)) are disordered. Pro residues predominate over residues 676–694 (TTPPTPTPAPCPTEPPPSP). Phosphothreonine is present on Thr-708. A phosphoserine mark is found at Ser-724, Ser-727, Ser-740, Ser-748, Ser-758, Ser-770, Ser-789, Ser-793, and Ser-815. The span at 760 to 773 (PLGLISRPRPSPLR) shows a compositional bias: low complexity. Residues 787–799 (RPSPLPSPQPAPR) are compositionally biased toward pro residues. Residues 800–816 (RAPWTLFPDSDPFWDSP) are compositionally biased toward low complexity.

This sequence belongs to the protein kinase superfamily. STE Ser/Thr protein kinase family. MAP kinase kinase kinase subfamily. In terms of assembly, homodimer; undergoes dimerization during activation. Interacts with MAP2K4/MKK4. Interacts with MAP2K7/MKK7. Found in a complex with SH3RF1, RAC1, MAP2K7/MKK7, MAPK8IP1/JIP1 and MAPK8/JNK1. The cofactor is Mg(2+). Post-translationally, autophosphorylation on serine and threonine residues within the activation loop plays a role in enzyme activation. Thr-277 is likely to be the main autophosphorylation site. Phosphorylation of Ser-555 and Ser-556 is induced by CDC42. Expressed in a wide variety of normal and neoplastic tissues including fetal lung, liver, heart and kidney, and adult lung, liver, heart, kidney, placenta, skeletal muscle, pancreas and brain.

The protein localises to the cytoplasm. It is found in the cytoskeleton. Its subcellular location is the microtubule organizing center. The protein resides in the centrosome. It carries out the reaction L-seryl-[protein] + ATP = O-phospho-L-seryl-[protein] + ADP + H(+). The catalysed reaction is L-threonyl-[protein] + ATP = O-phospho-L-threonyl-[protein] + ADP + H(+). Its activity is regulated as follows. Homodimerization via the leucine zipper domains is required for autophosphorylation and subsequent activation. Functionally, activates the JUN N-terminal pathway. Required for serum-stimulated cell proliferation and for mitogen and cytokine activation of MAPK14 (p38), MAPK3 (ERK) and MAPK8 (JNK1) through phosphorylation and activation of MAP2K4/MKK4 and MAP2K7/MKK7. Plays a role in mitogen-stimulated phosphorylation and activation of BRAF, but does not phosphorylate BRAF directly. Influences microtubule organization during the cell cycle. The polypeptide is Mitogen-activated protein kinase kinase kinase 11 (Homo sapiens (Human)).